Reading from the N-terminus, the 267-residue chain is Thiamine thiazole synthase (267 aa).

Residues S47, 66–67 (ER), G74, V138, and 164–166 (HID) contribute to the NAD(+) site. Positions 166 and 181 each coordinate Fe cation. NAD(+)-binding residues include S184 and M230. Residue R240 coordinates glycine.

The protein belongs to the THI4 family. As to quaternary structure, homooctamer; tetramer of dimers. The cofactor is Fe(2+).

The catalysed reaction is hydrogen sulfide + glycine + NAD(+) = ADP-5-ethyl-4-methylthiazole-2-carboxylate + nicotinamide + 3 H2O + H(+). It functions in the pathway cofactor biosynthesis; thiamine diphosphate biosynthesis. In terms of biological role, involved in the biosynthesis of the thiazole moiety of thiamine. Catalyzes the conversion of NAD and glycine to adenosine diphosphate 5-(2-hydroxyethyl)-4-methylthiazole-2-carboxylate (ADT), an adenylated thiazole intermediate, using free sulfide as a source of sulfur. This is Thiamine thiazole synthase from Methanocaldococcus jannaschii (strain ATCC 43067 / DSM 2661 / JAL-1 / JCM 10045 / NBRC 100440) (Methanococcus jannaschii).